A 310-amino-acid chain; its full sequence is Protein BIG GRAIN 1 (310 aa).

Positions 81–141 are disordered; the sequence is RAPGPHATTS…KKAKKPGASI (61 aa). Low complexity predominate over residues 90–106; sequence SSSSECSSYGGFSSSEA.

The protein belongs to the BIG GRAIN 1 (BG1) plant protein family.

The protein resides in the cell membrane. Its function is as follows. Involved in auxin transport. Positive regulator of the auxin signaling pathway involved in gravitropism, plant growth and grain development. This Oryza sativa subsp. indica (Rice) protein is Protein BIG GRAIN 1.